A 544-amino-acid polypeptide reads, in one-letter code: MSIFKKSSNTAPSQHEDVEALASDEADLAALGYKQEFKREFSAWTSFCVSFSVLGLLPSFASTMYYTTGYAGTPAMVWGWLIAMVFVQCVANGMAELCSSMPTSGGLYYAAAVLAPKGWGPFAAWLTGWSNYLVQVTGPPSVAYSFAGMILTLVQLHNPNFETQNYQIFLLAVAAMIAQGFISSMPTKVLAVFNTWGTVLNMLFLAIVMITVLAVAGTKTPRGFNSNHKVWNEFDNQTDWSNGMAMLMSFAGVIWTMSGYDSPFHLSEECSNASVAAPRAIVMTSAFGGIVGWLLNLCIAYTIVDVNAAMNDDLGQPFVVYLRQVCNYKTTVALTSLTVICSFMMGQGCMVAASRVTYSYARDGVFPFSKYLAIVDKRTKTPNVCVWMNVVVGILCCLLIFAGEAAINAIFSVGAIAAFVAFTTPIFLRVFFVKEDEFKRGPWHLGKFSKINGYAACAFVLLMVPILCFPQFRGKDNTPDAMNWTCVVFGGPMLMVLIWWFVSARKWFKGPRLTIGVDDAVSEINVLEGVTKSDDDSISTLKKK.

12 consecutive transmembrane segments (helical) span residues 41–61 (FSAWTSFCVSFSVLGLLPSFA), 71–91 (AGTPAMVWGWLIAMVFVQCVA), 106–126 (GLYYAAAVLAPKGWGPFAAWL), 166–186 (YQIFLLAVAAMIAQGFISSMP), 196–216 (WGTVLNMLFLAIVMITVLAVA), 240–260 (WSNGMAMLMSFAGVIWTMSGY), 280–300 (AIVMTSAFGGIVGWLLNLCIA), 332–352 (VALTSLTVICSFMMGQGCMVA), 391–411 (VVGILCCLLIFAGEAAINAIF), 413–433 (VGAIAAFVAFTTPIFLRVFFV), 451–471 (INGYAACAFVLLMVPILCFPQ), and 484–504 (WTCVVFGGPMLMVLIWWFVSA).

The protein belongs to the amino acid-polyamine-organocation (APC) superfamily.

Its subcellular location is the membrane. This is an uncharacterized protein from Schizosaccharomyces pombe (strain 972 / ATCC 24843) (Fission yeast).